The primary structure comprises 97 residues: Small ribosomal subunit protein bS6 (97 aa).

It belongs to the bacterial ribosomal protein bS6 family.

Binds together with bS18 to 16S ribosomal RNA. In Listeria monocytogenes serotype 4b (strain CLIP80459), this protein is Small ribosomal subunit protein bS6.